The following is a 176-amino-acid chain: Translation initiation factor IF-3 (176 aa).

The protein belongs to the IF-3 family. As to quaternary structure, monomer.

It is found in the cytoplasm. In terms of biological role, IF-3 binds to the 30S ribosomal subunit and shifts the equilibrium between 70S ribosomes and their 50S and 30S subunits in favor of the free subunits, thus enhancing the availability of 30S subunits on which protein synthesis initiation begins. The chain is Translation initiation factor IF-3 from Nitratidesulfovibrio vulgaris (strain DSM 19637 / Miyazaki F) (Desulfovibrio vulgaris).